Reading from the N-terminus, the 596-residue chain is Bromodomain-containing protein 9 (596 aa).

Positions 1–10 (MGKKHKKHKS) are enriched in basic residues. 2 disordered regions span residues 1-31 (MGKK…QYYV) and 49-119 (EVTE…SEGE). Positions 61–73 (SFYEDRSDHERER) are enriched in basic and acidic residues. Positions 74–84 (HKEKKKKKKKK) are enriched in basic residues. Positions 85–98 (SEKEKDKYLDEDER) are enriched in basic and acidic residues. The span at 99 to 109 (RRRKEEKKRKR) shows a compositional bias: basic residues. In terms of domain architecture, Bromo spans 148–252 (NESTPLQQLL…HTGFKMMSKQ (105 aa)). The histone H4K5ac H4K8ac and histone H4K5bu H4K8bu binding stretch occupies residues 226–228 (TYN). Residues 537-547 (DFHDVHNDRGG) are compositionally biased toward basic and acidic residues. The segment at 537-596 (DFHDVHNDRGGSRPSSSSSVSNNSERDHHLGSPSRISVGEQQDIHDPYEFLQSPETENQN) is disordered. Low complexity predominate over residues 548-559 (SRPSSSSSVSNN).

In terms of assembly, binds acetylated histones H3 and H4. Binds butyrylated histone H4.

The protein resides in the nucleus. In terms of biological role, plays a role in chromatin remodeling and regulation of transcription. Acts as a chromatin reader that recognizes and binds acylated histones: binds histones that are acetylated and/or butyrylated. The protein is Bromodomain-containing protein 9 (brd9) of Xenopus tropicalis (Western clawed frog).